The chain runs to 496 residues: Xylulose kinase (496 aa).

Position 83 to 84 (83 to 84 (MH)) interacts with substrate. Catalysis depends on aspartate 237, which acts as the Proton acceptor.

Belongs to the FGGY kinase family.

The enzyme catalyses D-xylulose + ATP = D-xylulose 5-phosphate + ADP + H(+). Catalyzes the phosphorylation of D-xylulose to D-xylulose 5-phosphate. The chain is Xylulose kinase from Staphylococcus epidermidis (strain ATCC 12228 / FDA PCI 1200).